The sequence spans 249 residues: MALDQSFEDAALLGELYGEGAFCFKSKKPEPITVSVPSDDTDDSNFDCNICLDSVQEPVVTLCGHLFCWPCIHKWLDVQSFSTSDEYQRHRQCPVCKSKVSHSTLVPLYGRGRCTTQEEGKNSVPKRPVGPVYRLEMPNSPYASTDLRLSQRVHFNSPQEGYYPVSGVMSSNSLSYSAVLDPVMVMVGEMVATRLFGTRVMDRFAYPDTYNLAGTSGPRMRRRIMQADKSLGRIFFFFMCCVVLCLLLF.

The segment at 48-97 (CNICLDSVQEPVVTLCGHLFCWPCIHKWLDVQSFSTSDEYQRHRQCPVCK) adopts an RING-type zinc-finger fold. Residues 231-248 (LGRIFFFFMCCVVLCLLL) form a helical; Anchor for type IV membrane protein membrane-spanning segment.

In terms of tissue distribution, ubiquitous. Highly expressed in roots.

The protein resides in the endoplasmic reticulum membrane. It carries out the reaction S-ubiquitinyl-[E2 ubiquitin-conjugating enzyme]-L-cysteine + [acceptor protein]-L-lysine = [E2 ubiquitin-conjugating enzyme]-L-cysteine + N(6)-ubiquitinyl-[acceptor protein]-L-lysine.. The protein operates within protein modification; protein ubiquitination. Its function is as follows. E3 ubiquitin-protein ligase that promotes the ubiquitination and proteasomal degradation of aquaporin PIP2-1. Forms a ubiquitin ligase complex in cooperation with the E2 enzymes UCB8/UCB10. The polypeptide is E3 ubiquitin-protein ligase RMA1 (RMA1) (Arabidopsis thaliana (Mouse-ear cress)).